Consider the following 27-residue polypeptide: uncharacterized protein (27 aa).

It localises to the plastid. The protein localises to the chloroplast. This is an uncharacterized protein from Marchantia polymorpha (Common liverwort).